A 392-amino-acid polypeptide reads, in one-letter code: tRNA (guanine(6)-N2)-methyltransferase (392 aa).

The region spanning Ser73 to Thr183 is the THUMP domain. S-adenosyl-L-methionine contacts are provided by residues His199 to Leu203, Ser230 to Thr232, Glu275, Asp303 to Ala304, and Asn317.

Belongs to the methyltransferase superfamily.

The protein resides in the cytoplasm. The catalysed reaction is guanosine(6) in tRNA + S-adenosyl-L-methionine = N(2)-methylguanosine(6) in tRNA + S-adenosyl-L-homocysteine + H(+). In terms of biological role, S-adenosyl-L-methionine-dependent methyltransferase that catalyzes the methylation of the guanosine nucleotide at position 6 (m2G6) in tRNA. This Archaeoglobus fulgidus (strain ATCC 49558 / DSM 4304 / JCM 9628 / NBRC 100126 / VC-16) protein is tRNA (guanine(6)-N2)-methyltransferase.